A 274-amino-acid chain; its full sequence is NH(3)-dependent NAD(+) synthetase (274 aa).

Residue 46–53 (GISGGQDS) participates in ATP binding. Residue aspartate 52 participates in Mg(2+) binding. Arginine 140 contacts deamido-NAD(+). Residue threonine 160 coordinates ATP. Glutamate 165 is a Mg(2+) binding site. The deamido-NAD(+) site is built by lysine 173 and aspartate 180. ATP-binding residues include lysine 189 and threonine 211. 260–261 (HK) serves as a coordination point for deamido-NAD(+).

It belongs to the NAD synthetase family. In terms of assembly, homodimer.

It carries out the reaction deamido-NAD(+) + NH4(+) + ATP = AMP + diphosphate + NAD(+) + H(+). Its pathway is cofactor biosynthesis; NAD(+) biosynthesis; NAD(+) from deamido-NAD(+) (ammonia route): step 1/1. Catalyzes the ATP-dependent amidation of deamido-NAD to form NAD. Uses ammonia as a nitrogen source. The chain is NH(3)-dependent NAD(+) synthetase from Lactococcus lactis subsp. cremoris (strain MG1363).